The sequence spans 807 residues: Spondin-1 (807 aa).

The signal sequence occupies residues M1–A28. The Reelin domain occupies F29–R194. Cystine bridges form between C44/C128, C156/C182, C199/C336, C200/C340, C202/C415, C443/C480, C454/C489, C459/C494, C502/C538, C513/C517, C548/C554, C559/C595, C570/C574, C605/C610, C615/C650, C626/C630, and C660/C665. In terms of domain architecture, Spondin spans P195–P388. The N-linked (GlcNAc...) asparagine glycan is linked to N214. Ca(2+) contacts are provided by D325, D354, and D358. TSP type-1 domains follow at residues T442 to S495, T501 to S555, S558 to H611, P614 to P666, and D668 to L721. Residue N681 is glycosylated (N-linked (GlcNAc...) asparagine). Residues R732–E746 show a composition bias toward basic and acidic residues. The segment at R732–F752 is disordered. One can recognise a TSP type-1 6 domain in the interval G754–P806.

Binds to the central extracellular domain of APP and inhibits beta-secretase cleavage of APP. As to expression, expressed at high levels in the floor plate.

It is found in the secreted. The protein localises to the extracellular space. Its subcellular location is the extracellular matrix. Cell adhesion protein that promotes the attachment of spinal cord and sensory neuron cells and the outgrowth of neurites in vitro. May contribute to the growth and guidance of axons in both the spinal cord and the PNS. In Rattus norvegicus (Rat), this protein is Spondin-1 (Spon1).